The chain runs to 25 residues: Pregnancy-associated glycoprotein 72 (25 aa).

N-linked (GlcNAc...) asparagine glycosylation is found at N4 and N21.

Belongs to the peptidase A1 family. N-glycosylated. Expressed in chorionic epithelium (trophectoderm).

It localises to the secreted. The protein resides in the extracellular space. The protein is Pregnancy-associated glycoprotein 72 of Bison bison (American bison).